The following is a 204-amino-acid chain: MNSPETAEYNGHPTGHVFDQARAEAAVRELLYAVGEDPDRHGLADTPARVARAYREIFAGLYTDPDTVLNTTFDEQHDELVLVKSIPMYSTCEHHLVSFHGVAHVGYIPGQHGRVTGLSKIARLVDLYAKRPQVQERLTAQIADALVRKLEPRGVIVVVEAEHLCMAMRGVRKPGATTTTSAVRGQFKRDAASRAEVLDLMMRT.

The Zn(2+) site is built by C92, H95, and C165.

The protein belongs to the GTP cyclohydrolase I family. In terms of assembly, homomer.

It catalyses the reaction GTP + H2O = 7,8-dihydroneopterin 3'-triphosphate + formate + H(+). The protein operates within cofactor biosynthesis; 7,8-dihydroneopterin triphosphate biosynthesis; 7,8-dihydroneopterin triphosphate from GTP: step 1/1. The sequence is that of GTP cyclohydrolase 1 from Mycobacteroides abscessus (strain ATCC 19977 / DSM 44196 / CCUG 20993 / CIP 104536 / JCM 13569 / NCTC 13031 / TMC 1543 / L948) (Mycobacterium abscessus).